A 495-amino-acid chain; its full sequence is ATP synthase subunit beta, chloroplastic (495 aa).

172–179 (GGAGVGKT) lines the ATP pocket.

The protein belongs to the ATPase alpha/beta chains family. In terms of assembly, F-type ATPases have 2 components, CF(1) - the catalytic core - and CF(0) - the membrane proton channel. CF(1) has five subunits: alpha(3), beta(3), gamma(1), delta(1), epsilon(1). CF(0) has four main subunits: a(1), b(1), b'(1) and c(9-12).

It localises to the plastid. The protein localises to the chloroplast thylakoid membrane. The catalysed reaction is ATP + H2O + 4 H(+)(in) = ADP + phosphate + 5 H(+)(out). Produces ATP from ADP in the presence of a proton gradient across the membrane. The catalytic sites are hosted primarily by the beta subunits. This chain is ATP synthase subunit beta, chloroplastic, found in Convallaria majalis (Lily of the valley).